The primary structure comprises 367 residues: tRNA/tmRNA (uracil-C(5))-methyltransferase (367 aa).

Gln-190, Tyr-218, Asn-223, Glu-239, and Asp-299 together coordinate S-adenosyl-L-methionine. Cys-324 acts as the Nucleophile in catalysis. Residue Glu-358 is the Proton acceptor of the active site.

This sequence belongs to the class I-like SAM-binding methyltransferase superfamily. RNA M5U methyltransferase family. TrmA subfamily.

It carries out the reaction uridine(54) in tRNA + S-adenosyl-L-methionine = 5-methyluridine(54) in tRNA + S-adenosyl-L-homocysteine + H(+). The catalysed reaction is uridine(341) in tmRNA + S-adenosyl-L-methionine = 5-methyluridine(341) in tmRNA + S-adenosyl-L-homocysteine + H(+). Its function is as follows. Dual-specificity methyltransferase that catalyzes the formation of 5-methyluridine at position 54 (m5U54) in all tRNAs, and that of position 341 (m5U341) in tmRNA (transfer-mRNA). This Pectobacterium carotovorum subsp. carotovorum (strain PC1) protein is tRNA/tmRNA (uracil-C(5))-methyltransferase.